Consider the following 199-residue polypeptide: Transcription factor 15 (199 aa).

The tract at residues 25–67 (EENRSESDASDQSFGCCEGPEAARRGPGPGGGRRAGGGGGAGP) is disordered. Residues 51–66 (PGPGGGRRAGGGGGAG) show a composition bias toward gly residues. The bHLH domain maps to 72–124 (RQRQAANARERDRTQSVNTAFTALRTLIPTEPVDRKLSKIETVRLASSYIAHL).

In terms of assembly, heterodimer; efficient DNA binding requires dimerization with another bHLH protein, such as TCF3/E12. Interacts with MEOX2.

Its subcellular location is the nucleus. Its function is as follows. Early transcription factor that plays a key role in somitogenesis, paraxial mesoderm development and regulation of stem cell pluripotency. Essential for the mesenchymal to epithelial transition associated with somite formation. Required for somite morphogenesis, thereby regulating patterning of the axial skeleton and skeletal muscles. Required for proper localization of somite epithelium markers during the mesenchymal to epithelial transition. Also plays a key role in regulation of stem cell pluripotency. Promotes pluripotency exit of embryonic stem cells (ESCs) by priming ESCs for differentiation. Acts as a key regulator of self-renewal of hematopoietic stem cells (HSCs) by mediating HSCs quiescence and long-term self-renewal. Together with MEOX2, regulates transcription in heart endothelial cells to regulate fatty acid transport across heart endothelial cells. Acts by forming a heterodimer with another helix-loop-helix (bHLH) protein, such as TCF3/E12, that binds DNA on E-box motifs (5'-CANNTG-3') and activates transcription of target genes. The chain is Transcription factor 15 from Homo sapiens (Human).